Reading from the N-terminus, the 284-residue chain is MNKLKDYAELTRFNRPIGSFLLMWPTLWALWLAADGMPQWHLVIIFILGVFSMRSAGCVINDYADRKVDGFVDRTKNRPLPSGRVSEKEALMLFCALSILSFILVLFTDLRTILLSFVGLGLAALYPFMKRYTHLPQLFLGLAFSWAIPMAYSAQGGDLTDPKLWMLFVANCFWTIAYDTYYAMTDRPDDLKIGIKSTAILFGQYDLFVIICLQGLTLSLLTWIGLLAGLHWLYFVSLIVCVGLFYQQFKQAKERDRQACFRSFLDNNRVGYCVFIGLVASYFM.

The next 7 membrane-spanning stretches (helical) occupy residues 13-32 (FNRP…ALWL), 90-110 (ALML…FTDL), 112-132 (TILL…MKRY), 134-154 (HLPQ…AYSA), 164-184 (LWML…YYAM), 200-220 (ILFG…TLSL), and 224-244 (IGLL…CVGL).

The protein belongs to the UbiA prenyltransferase family. Mg(2+) serves as cofactor.

It localises to the cell inner membrane. It catalyses the reaction all-trans-octaprenyl diphosphate + 4-hydroxybenzoate = 4-hydroxy-3-(all-trans-octaprenyl)benzoate + diphosphate. The protein operates within cofactor biosynthesis; ubiquinone biosynthesis. Its function is as follows. Catalyzes the prenylation of para-hydroxybenzoate (PHB) with an all-trans polyprenyl group. Mediates the second step in the final reaction sequence of ubiquinone-8 (UQ-8) biosynthesis, which is the condensation of the polyisoprenoid side chain with PHB, generating the first membrane-bound Q intermediate 3-octaprenyl-4-hydroxybenzoate. In Marinomonas sp. (strain MWYL1), this protein is 4-hydroxybenzoate octaprenyltransferase.